The chain runs to 273 residues: NADPH-dependent 7-cyano-7-deazaguanine reductase (273 aa).

Substrate is bound at residue 80–82 (VES). 82-83 (SK) contributes to the NADPH binding site. Catalysis depends on C180, which acts as the Thioimide intermediate. D187 (proton donor) is an active-site residue. 219–220 (HE) provides a ligand contact to substrate. 248–249 (RG) contacts NADPH.

Belongs to the GTP cyclohydrolase I family. QueF type 2 subfamily. Homodimer.

It is found in the cytoplasm. It carries out the reaction 7-aminomethyl-7-carbaguanine + 2 NADP(+) = 7-cyano-7-deazaguanine + 2 NADPH + 3 H(+). The protein operates within tRNA modification; tRNA-queuosine biosynthesis. Catalyzes the NADPH-dependent reduction of 7-cyano-7-deazaguanine (preQ0) to 7-aminomethyl-7-deazaguanine (preQ1). The sequence is that of NADPH-dependent 7-cyano-7-deazaguanine reductase from Bordetella parapertussis (strain 12822 / ATCC BAA-587 / NCTC 13253).